The chain runs to 233 residues: MSTESMIRDVELAEEALPKKAGGPQGSRRCLCLSLFSFLLVAGATTLFCLLHFGVIGPQKEELLTGLQLMNPLAQTLRSSSQASRDKPVAHVVADPAAQGQLQWEKRFANTLLANGVKLEDNQLVVPTDGLYLIYSQVLFSGQRCPSTPVFLTHTISRLAVSYPNKANLLSAIKSPCQGGTSEEAEAKPWYEPIYLGGVFQLEKDDRLSAEINMPNYLDFAESGQVYFGIIAL.

Over Met-1–Ser-34 the chain is Cytoplasmic. Position 2 is a phosphoserine; by CK1 (Ser-2). Residues Lys-19 and Lys-20 are each lipidated (N6-myristoyl lysine). A helical; Signal-anchor for type II membrane protein transmembrane segment spans residues Leu-35–Gly-57. The Extracellular portion of the chain corresponds to Pro-58–Leu-233. Ser-80 is a glycosylation site (O-linked (GalNAc...) serine; in soluble form). Residues Pro-88–Leu-233 form the THD domain. Residues Cys-145 and Cys-177 are joined by a disulfide bond.

The protein belongs to the tumor necrosis factor family. Homotrimer. Interacts with SPPL2B. Post-translationally, the soluble form derives from the membrane form by proteolytic processing. The membrane-bound form is further proteolytically processed by SPPL2A or SPPL2B through regulated intramembrane proteolysis producing TNF intracellular domains (ICD1 and ICD2) released in the cytosol and TNF C-domain 1 and C-domain 2 secreted into the extracellular space. The membrane form, but not the soluble form, is phosphorylated on serine residues. Dephosphorylation of the membrane form occurs by binding to soluble TNFRSF1A/TNFR1. In terms of processing, O-glycosylated; glycans contain galactose, N-acetylgalactosamine and N-acetylneuraminic acid. Post-translationally, the soluble form is demyristoylated by SIRT6, promoting its secretion.

Its subcellular location is the cell membrane. It localises to the membrane. It is found in the secreted. Functionally, cytokine that binds to TNFRSF1A/TNFR1 and TNFRSF1B/TNFBR. It is mainly secreted by macrophages and can induce cell death of certain tumor cell lines. It is potent pyrogen causing fever by direct action or by stimulation of interleukin-1 secretion and is implicated in the induction of cachexia, Under certain conditions it can stimulate cell proliferation and induce cell differentiation. Induces insulin resistance in adipocytes via inhibition of insulin-induced IRS1 tyrosine phosphorylation and insulin-induced glucose uptake. Induces GKAP42 protein degradation in adipocytes which is partially responsible for TNF-induced insulin resistance. Plays a role in angiogenesis by inducing VEGF production synergistically with IL1B and IL6. Promotes osteoclastogenesis and therefore mediates bone resorption. The TNF intracellular domain (ICD) form induces IL12 production in dendritic cells. The chain is Tumor necrosis factor (TNF) from Camelus bactrianus (Bactrian camel).